The following is an 878-amino-acid chain: E3 ubiquitin-protein ligase BRE1-like 1 (878 aa).

A disordered region spans residues 1 to 21 (MASTGEPDRKRRHFSSISPSE). 4 coiled-coil regions span residues 48–76 (QNLK…IKEK), 200–261 (QLAL…ELQQ), 293–382 (SDRE…EKLQ), and 537–624 (LDMY…ILKS). The RING-type zinc finger occupies 826-865 (CKACNDRPKEVVITKCYHLFCNPCVQKLTGTRQKKCPTCS).

This sequence belongs to the BRE1 family. May act as a tetramer consisting of two copies of HUB1 and two copies of HUB2. Interacts with MED21. In terms of tissue distribution, ubiquitously expressed.

The protein resides in the nucleus. It carries out the reaction S-ubiquitinyl-[E2 ubiquitin-conjugating enzyme]-L-cysteine + [acceptor protein]-L-lysine = [E2 ubiquitin-conjugating enzyme]-L-cysteine + N(6)-ubiquitinyl-[acceptor protein]-L-lysine.. It participates in protein modification; protein ubiquitination. E3 ubiquitin-protein ligase that monoubiquitinates H2B to form H2BK143ub1. H2BK143ub1 gives a specific tag for epigenetic transcriptional activation and is also prerequisite for H3K4me and maybe H3K79me. It thereby plays a central role in histone code and gene regulation. Forms a ubiquitin ligase complex in cooperation with the E2 enzyme UBC2/RAD6. Required for the regulation of flowering time and defense against necrotrophic fungal pathogens. Involved in the control of seed dormancy and germination. This chain is E3 ubiquitin-protein ligase BRE1-like 1 (HUB1), found in Arabidopsis thaliana (Mouse-ear cress).